Reading from the N-terminus, the 581-residue chain is MNLFTEMRGLVLEALEQMQAEGALPQGLDFANVAVEPPRDAAHGDMATNAAMVLAKPAGQKPRDIAETLAARLAADARVAKAEVAGPGFLNLTLAAPVWQRVVGTVLLDGTAYGRSDMGQGKKVNVEYVSANPTGPLHVGHTRGAVFGDALASLLDYAGYQVTREYYINDGGAQVDVLARSVYLRYLEAHGQAVEFVDGTYPGEYLVEVGQALKDKVGDAYVGQPEEVWLEAIRDFATDAMMELIRADLAQLGVKMDVFYSEKSLYGTGRIEAAIDSLRAKGLIYRGTLEPPKGKLPEDWEPREQTLFKSTEHGDDVDRPIMKSDGAWTYFAPDIAYHYDKVSRGFDALIDVFGADHGGYVKRMKAAVSALSDGRVPLDIKLCQLVKLWKNGEPFKMSKRAGNFVTLRDVVDQVGADVTRFVMLTRKNDAPLDFDFDKVLEQSRENPVFYVQYAHARVSSVLRRAAEAGIDTSDTALRAADLGLLGHEAELAVMRKLAEWPRLVEIAARTNEPHRIAFYLYELAGDFHALWNRGNDVSELRFIQDGDEGTSQAKIALARSVAVVISAGLAILGVTPAEEMR.

Positions 131-141 (ANPTGPLHVGH) match the 'HIGH' region motif.

It belongs to the class-I aminoacyl-tRNA synthetase family. In terms of assembly, monomer.

Its subcellular location is the cytoplasm. The enzyme catalyses tRNA(Arg) + L-arginine + ATP = L-arginyl-tRNA(Arg) + AMP + diphosphate. The sequence is that of Arginine--tRNA ligase from Ruegeria pomeroyi (strain ATCC 700808 / DSM 15171 / DSS-3) (Silicibacter pomeroyi).